Reading from the N-terminus, the 137-residue chain is MHELSIACEIFEQVKVTAEAHGATEVKHVTLQMGRLSHTNPEQLSFCFKTLAEGSIAENADLIVEMVPPTLECECGYTGTIDQERIRESNELTSELLAYIAAMDCPVCGKQAHIAGGRELIIKSIEIETENENESQR.

Ni(2+) is bound at residue His2. Residues Cys73, Cys75, Cys105, and Cys108 each coordinate Zn(2+).

It belongs to the HypA/HybF family.

Involved in the maturation of [NiFe] hydrogenases. Required for nickel insertion into the metal center of the hydrogenase. This Methanosarcina mazei (strain ATCC BAA-159 / DSM 3647 / Goe1 / Go1 / JCM 11833 / OCM 88) (Methanosarcina frisia) protein is Hydrogenase maturation factor HypA.